Reading from the N-terminus, the 114-residue chain is Eukaryotic translation initiation factor 6 (114 aa).

The protein belongs to the eIF-6 family. As to quaternary structure, monomer. Associates with the 60S ribosomal subunit.

The protein localises to the cytoplasm. It localises to the nucleus. Its subcellular location is the nucleolus. Binds to the 60S ribosomal subunit and prevents its association with the 40S ribosomal subunit to form the 80S initiation complex in the cytoplasm. May also be involved in ribosome biogenesis. The polypeptide is Eukaryotic translation initiation factor 6 (Trypanosoma cruzi).